A 530-amino-acid polypeptide reads, in one-letter code: Arginine--tRNA ligase (530 aa).

The short motif at 113-123 is the 'HIGH' region element; that stretch reads ANPTGPLHIGH.

The protein belongs to the class-I aminoacyl-tRNA synthetase family. In terms of assembly, monomer.

The protein resides in the cytoplasm. The enzyme catalyses tRNA(Arg) + L-arginine + ATP = L-arginyl-tRNA(Arg) + AMP + diphosphate. The protein is Arginine--tRNA ligase of Campylobacter jejuni (strain RM1221).